Reading from the N-terminus, the 904-residue chain is MKGNQEEYRLKFFLDHDYLRRECKVCKTPFWSKDKTREDCADIPCSDYYFLDMKESNLNWSVSEARRRFLDFFRRNGHEIIPPKPVLARWREDLYLTIASIVDFQPYITSGISPPPANPLVVSQPCIRMDDVDNVGITFGRHLTTFEMGGHHAFNYPDKFLYWKDETVAYAKEFFTKEMGIPEELLNFKESWWEGGGNAGPSFEVTVGGLELATLVFMQYEIRDGEYVPLKLKIVDTGYGIERLAWFTQKTPTAFHAIYGELVDKFLEKLGLPSLNPDMLKVASRFAGRIDPDVPSTIQGHREQVAKAMGLPVKEVSEELTRAARVFQVLDHTKTIALMLGDGLVPSSGGEGYLGRLLIRRALRTLKLLNVDVRLSELVDMQIGFWGKDFTQLVRNRDYILDAVNLEQEKFNEILNRMSSVVSSLTKKKEIGVEDLIQLYDSQGIPPDLMAEEMRSKGLKVEVPHNFYSIVAKRHQSAPVKKEWDTTKLPPEVVKQVKDLPPTEKLYYKDQYARNFEGVIVKSLGKYLVLDRTVFYPEGGGQLGDQGWLLLDGQRVKVVDTQKVGDVVVHVLEREISAKEGDKVKGEIDWVRRFRMMRHHTGTHVVLAAAKKLLGDHVWQAGAEKTPEKARLDITHHRNLTREEVKRIEEMANLVVDDRRPVTPFEINRTEAETKYGVSIYEGGVPNKAVIRLLEIKDWDVESCGGTHVANTADIGGIKIVNVEKIQDGIIRLEYVAGDVISSYAGNLEDKLEGLASKLETSTSQIESRVEKLKEENERMKELIAFYRRQYLDDLEKHVETRNVGKVKIVILPSLKDEDLEREAMRRLTSTQGVVVIHVNQVNGKLQIEIGTSKDLNVSTVVTELVKAGGKGGGRGTFGSVMIEKGTKEEVIDIVERAIKGGNS.

Positions 600, 604, 704, and 708 each coordinate Zn(2+).

Belongs to the class-II aminoacyl-tRNA synthetase family. Zn(2+) serves as cofactor.

It is found in the cytoplasm. The enzyme catalyses tRNA(Ala) + L-alanine + ATP = L-alanyl-tRNA(Ala) + AMP + diphosphate. Catalyzes the attachment of alanine to tRNA(Ala) in a two-step reaction: alanine is first activated by ATP to form Ala-AMP and then transferred to the acceptor end of tRNA(Ala). Also edits incorrectly charged Ser-tRNA(Ala) and Gly-tRNA(Ala) via its editing domain. In Metallosphaera sedula (strain ATCC 51363 / DSM 5348 / JCM 9185 / NBRC 15509 / TH2), this protein is Alanine--tRNA ligase.